We begin with the raw amino-acid sequence, 560 residues long: Probable pectinesterase/pectinesterase inhibitor 20 (560 aa).

The N-terminal stretch at 1 to 24 (MSQKLMFLFTLACLSSLPSPFISA) is a signal peptide. Residues 25-179 (QIPAIGNATS…TKLYGVSLAL (155 aa)) are pectinesterase inhibitor 20. 7 N-linked (GlcNAc...) asparagine glycosylation sites follow: asparagine 31, asparagine 168, asparagine 251, asparagine 255, asparagine 268, asparagine 307, and asparagine 314. The interval 246 to 544 (VTVIQNGTGN…FTVTNFLVGE (299 aa)) is pectinesterase 20. Threonine 323 contributes to the substrate binding site. N-linked (GlcNAc...) asparagine glycosylation is present at asparagine 340. Glutamine 353 is a binding site for substrate. Aspartate 376 serves as the catalytic Proton donor; for pectinesterase activity. Cysteine 390 and cysteine 410 are disulfide-bonded. The active-site Nucleophile; for pectinesterase activity is the aspartate 397. Positions 417 to 441 (PRKGQSNEVTAQGRTDPNQNTGTAI) are disordered. Positions 419-439 (KGQSNEVTAQGRTDPNQNTGT) are enriched in polar residues. An N-linked (GlcNAc...) asparagine glycan is attached at asparagine 456. Residues arginine 465 and tryptophan 467 each contribute to the substrate site. Asparagine 507, asparagine 528, and asparagine 534 each carry an N-linked (GlcNAc...) asparagine glycan.

In the N-terminal section; belongs to the PMEI family. The protein in the C-terminal section; belongs to the pectinesterase family. As to expression, expressed in flower buds.

It is found in the secreted. It localises to the cell wall. It catalyses the reaction [(1-&gt;4)-alpha-D-galacturonosyl methyl ester](n) + n H2O = [(1-&gt;4)-alpha-D-galacturonosyl](n) + n methanol + n H(+). It participates in glycan metabolism; pectin degradation; 2-dehydro-3-deoxy-D-gluconate from pectin: step 1/5. In terms of biological role, acts in the modification of cell walls via demethylesterification of cell wall pectin. In Arabidopsis thaliana (Mouse-ear cress), this protein is Probable pectinesterase/pectinesterase inhibitor 20 (PME20).